Reading from the N-terminus, the 560-residue chain is Dihydroxy-acid dehydratase (560 aa).

Residues 1–20 are disordered; that stretch reads MGDNLKKRSSMTTDGDNRAP. Cys-52 contacts [2Fe-2S] cluster. Position 84 (Asp-84) interacts with Mg(2+). Cys-125 is a binding site for [2Fe-2S] cluster. Asp-126 and Lys-127 together coordinate Mg(2+). Lys-127 is subject to N6-carboxylysine. Cys-197 lines the [2Fe-2S] cluster pocket. Mg(2+) is bound at residue Glu-448. Ser-474 serves as the catalytic Proton acceptor.

The protein belongs to the IlvD/Edd family. In terms of assembly, homodimer. Requires [2Fe-2S] cluster as cofactor. Mg(2+) is required as a cofactor.

The catalysed reaction is (2R)-2,3-dihydroxy-3-methylbutanoate = 3-methyl-2-oxobutanoate + H2O. The enzyme catalyses (2R,3R)-2,3-dihydroxy-3-methylpentanoate = (S)-3-methyl-2-oxopentanoate + H2O. The protein operates within amino-acid biosynthesis; L-isoleucine biosynthesis; L-isoleucine from 2-oxobutanoate: step 3/4. It participates in amino-acid biosynthesis; L-valine biosynthesis; L-valine from pyruvate: step 3/4. Its function is as follows. Functions in the biosynthesis of branched-chain amino acids. Catalyzes the dehydration of (2R,3R)-2,3-dihydroxy-3-methylpentanoate (2,3-dihydroxy-3-methylvalerate) into 2-oxo-3-methylpentanoate (2-oxo-3-methylvalerate) and of (2R)-2,3-dihydroxy-3-methylbutanoate (2,3-dihydroxyisovalerate) into 2-oxo-3-methylbutanoate (2-oxoisovalerate), the penultimate precursor to L-isoleucine and L-valine, respectively. The polypeptide is Dihydroxy-acid dehydratase (Leptospira interrogans serogroup Icterohaemorrhagiae serovar Lai (strain 56601)).